The sequence spans 424 residues: Homeobox-containing protein 1 (424 aa).

Residues 1 to 30 (MLFTIEQLELIKKLQHTGMSSDQLLKAFGE) form the HNF-p1 domain. Positions 103–199 (SQRTPMKEIT…PNKLAAFLAD (97 aa)) constitute a POU-specific atypical domain. Residues 215-291 (QRRERYVFRP…NKRKELRRRS (77 aa)) constitute a DNA-binding region (homeobox). The tract at residues 291-345 (SAEASAASTSSASSSASSTANHDSVSVSSMSPRDEETSSRNTTPETAISPSPAVS) is disordered. Residues 293 to 310 (EASAASTSSASSSASSTA) are compositionally biased toward low complexity. Composition is skewed to polar residues over residues 311–321 (NHDSVSVSSMS) and 329–345 (SRNT…PAVS).

This sequence belongs to the HMBOX1 homeobox family. Expressed in both AWC neurons. Also expressed in the FLP mechanosensory neurons.

It is found in the nucleus. Transcriptional repressor which maintains cell fate asymmetry of AWC neurons in adults by repressing the expression of multiple AWC (OFF) genes, including srsx-3 in the AWC (ON) neuron. The protein is Homeobox-containing protein 1 of Caenorhabditis elegans.